A 140-amino-acid polypeptide reads, in one-letter code: Nucleoside diphosphate kinase (140 aa).

ATP contacts are provided by Lys11, Phe59, Arg87, Thr93, Arg104, and Asn114. His117 (pros-phosphohistidine intermediate) is an active-site residue.

The protein belongs to the NDK family. As to quaternary structure, homotetramer. Requires Mg(2+) as cofactor.

The protein localises to the cytoplasm. It carries out the reaction a 2'-deoxyribonucleoside 5'-diphosphate + ATP = a 2'-deoxyribonucleoside 5'-triphosphate + ADP. The catalysed reaction is a ribonucleoside 5'-diphosphate + ATP = a ribonucleoside 5'-triphosphate + ADP. Functionally, major role in the synthesis of nucleoside triphosphates other than ATP. The ATP gamma phosphate is transferred to the NDP beta phosphate via a ping-pong mechanism, using a phosphorylated active-site intermediate. This Rhizobium etli (strain ATCC 51251 / DSM 11541 / JCM 21823 / NBRC 15573 / CFN 42) protein is Nucleoside diphosphate kinase.